Reading from the N-terminus, the 269-residue chain is Indole-3-glycerol phosphate synthase (269 aa).

Belongs to the TrpC family.

It catalyses the reaction 1-(2-carboxyphenylamino)-1-deoxy-D-ribulose 5-phosphate + H(+) = (1S,2R)-1-C-(indol-3-yl)glycerol 3-phosphate + CO2 + H2O. Its pathway is amino-acid biosynthesis; L-tryptophan biosynthesis; L-tryptophan from chorismate: step 4/5. This is Indole-3-glycerol phosphate synthase from Rhodococcus jostii (strain RHA1).